Here is an 86-residue protein sequence, read N- to C-terminus: MAEDIQAKIKNYQTAPFDSRFPNQNQTRNCWQNYLDFHRCEKAMTAKGGDVSVCEWYRRVYKSLCPISWVSTWDDRRAEGTFPGKI.

At Ala2 the chain carries N-acetylalanine. The CHCH domain occupies 27–73; sequence TRNCWQNYLDFHRCEKAMTAKGGDVSVCEWYRRVYKSLCPISWVSTW. A Cx9C motif motif is present at residues 30 to 40; sequence CWQNYLDFHRC. Cystine bridges form between Cys30/Cys65 and Cys40/Cys54. The Cx10C motif signature appears at 54–65; that stretch reads CEWYRRVYKSLC. Lys62 carries the post-translational modification N6-acetyllysine.

Belongs to the cytochrome c oxidase subunit 6B family. As to quaternary structure, component of the cytochrome c oxidase (complex IV, CIV), a multisubunit enzyme composed of 14 subunits. The complex is composed of a catalytic core of 3 subunits MT-CO1, MT-CO2 and MT-CO3, encoded in the mitochondrial DNA, and 11 supernumerary subunits COX4I1 (or COX4I2), COX5A, COX5B, COX6A2 (or COX6A1), COX6B1 (or COX6B2), COX6C, COX7A1 (or COX7A2), COX7B, COX7C, COX8B and NDUFA4, which are encoded in the nuclear genome. The complex exists as a monomer or a dimer and forms supercomplexes (SCs) in the inner mitochondrial membrane with NADH-ubiquinone oxidoreductase (complex I, CI) and ubiquinol-cytochrome c oxidoreductase (cytochrome b-c1 complex, complex III, CIII), resulting in different assemblies (supercomplex SCI(1)III(2)IV(1) and megacomplex MCI(2)III(2)IV(2)).

The protein localises to the mitochondrion inner membrane. It functions in the pathway energy metabolism; oxidative phosphorylation. Functionally, component of the cytochrome c oxidase, the last enzyme in the mitochondrial electron transport chain which drives oxidative phosphorylation. The respiratory chain contains 3 multisubunit complexes succinate dehydrogenase (complex II, CII), ubiquinol-cytochrome c oxidoreductase (cytochrome b-c1 complex, complex III, CIII) and cytochrome c oxidase (complex IV, CIV), that cooperate to transfer electrons derived from NADH and succinate to molecular oxygen, creating an electrochemical gradient over the inner membrane that drives transmembrane transport and the ATP synthase. Cytochrome c oxidase is the component of the respiratory chain that catalyzes the reduction of oxygen to water. Electrons originating from reduced cytochrome c in the intermembrane space (IMS) are transferred via the dinuclear copper A center (CU(A)) of subunit 2 and heme A of subunit 1 to the active site in subunit 1, a binuclear center (BNC) formed by heme A3 and copper B (CU(B)). The BNC reduces molecular oxygen to 2 water molecules using 4 electrons from cytochrome c in the IMS and 4 protons from the mitochondrial matrix. In Bos taurus (Bovine), this protein is Cytochrome c oxidase subunit 6B1 (COX6B1).